Here is a 144-residue protein sequence, read N- to C-terminus: Maximins 3/H16 (144 aa).

The first 18 residues, 1 to 18, serve as a signal peptide directing secretion; the sequence is MNFKYIVAVSFLIASAYA. Propeptides lie at residues 19-43 and 73-122; these read RSVQNDEQSLSQRDVLEEESLREIR and RTAE…KKEK. Ile143 is modified (isoleucine amide).

It belongs to the bombinin family. In terms of tissue distribution, expressed by the skin glands.

The protein resides in the secreted. Maximin-3 shows antibacterial activity against both Gram-positive and Gram-negative bacteria. It also shows antimicrobial activity against the fungus C.albicans, but not against A.flavus nor P.uticale. It has little hemolytic activity. It possess a significant cytotoxicity against tumor cell lines. It possess a significant anti-HIV activity. It shows high spermicidal activity. In terms of biological role, maximin-H16 shows antimicrobial activity against bacteria and against the fungus C.albicans. Shows strong hemolytic activity. The sequence is that of Maximins 3/H16 from Bombina maxima (Giant fire-bellied toad).